A 350-amino-acid polypeptide reads, in one-letter code: Galactokinase (350 aa).

14–17 (EHTD) is a substrate binding site. ATP-binding positions include S46 and 96–102 (GAGLSSS). The Mg(2+) site is built by S102 and E134. Catalysis depends on D146, which acts as the Proton acceptor. Residue Y196 participates in substrate binding.

Belongs to the GHMP kinase family. GalK subfamily.

It is found in the cytoplasm. It catalyses the reaction alpha-D-galactose + ATP = alpha-D-galactose 1-phosphate + ADP + H(+). Its pathway is carbohydrate metabolism; galactose metabolism. In terms of biological role, catalyzes the transfer of the gamma-phosphate of ATP to D-galactose to form alpha-D-galactose-1-phosphate (Gal-1-P). This Thermotoga maritima (strain ATCC 43589 / DSM 3109 / JCM 10099 / NBRC 100826 / MSB8) protein is Galactokinase.